A 70-amino-acid chain; its full sequence is Turripeptide OL179 (70 aa).

The first 21 residues, 1–21 (MMAKQVVVLLALLLLLPIVTA), serve as a signal peptide directing secretion. Positions 22 to 32 (SMGDASGRTGR) are excised as a propeptide.

As to expression, expressed by the venom duct.

The protein localises to the secreted. Functionally, acts as a neurotoxin by inhibiting an ion channel. This chain is Turripeptide OL179, found in Iotyrris olangoensis (Sea snail).